The sequence spans 718 residues: Peroxisomal bifunctional enzyme (718 aa).

The interval 1 to 280 (MAEYLRLPHS…FAEKSANKWS (280 aa)) is enoyl-CoA hydratase / isomerase. Lys38 is modified (N6-succinyllysine). Residue Gly99 participates in substrate binding. N6-acetyllysine; alternate occurs at positions 163 and 172. Residues Lys163 and Lys172 each carry the N6-succinyllysine; alternate modification. The residue at position 181 (Lys181) is an N6-succinyllysine. N6-acetyllysine; alternate is present on residues Lys189 and Lys217. An N6-succinyllysine; alternate mark is found at Lys189 and Lys217. At Lys240 the chain carries N6-succinyllysine. Lys248 is modified (N6-acetyllysine). Lys252 carries the post-translational modification N6-succinyllysine. Position 274 is an N6-acetyllysine; alternate (Lys274). An N6-succinyllysine; alternate modification is found at Lys274. An N6-succinyllysine mark is found at Lys278, Lys288, and Lys329. The 3-hydroxyacyl-CoA dehydrogenase stretch occupies residues 281 to 567 (TPSGASWKTA…DMLCEAGRFG (287 aa)). N6-acetyllysine is present on residues Lys344, Lys348, Lys355, and Lys459. Position 527 is an N6-succinyllysine (Lys527). Thr543 bears the Phosphothreonine mark. An N6-succinyllysine modification is found at Lys572. N6-acetyllysine; alternate occurs at positions 579, 586, and 705. Lys579, Lys586, and Lys705 each carry N6-succinyllysine; alternate. Positions 716 to 718 (SKL) match the Microbody targeting signal motif. The residue at position 717 (Lys717) is an N6-succinyllysine.

This sequence in the N-terminal section; belongs to the enoyl-CoA hydratase/isomerase family. In the C-terminal section; belongs to the 3-hydroxyacyl-CoA dehydrogenase family. In terms of assembly, monomer. Post-translationally, acetylated, leading to enhanced enzyme activity. Acetylation is enhanced by up to 80% after treatment either with trichostin A (TCA) or with nicotinamide (NAM) with highest increase on Lys-344. Acetylation and enzyme activity increased by about 1.5% on addition of fatty acids.

The protein localises to the peroxisome. It carries out the reaction a (3S)-3-hydroxyacyl-CoA = a (2E)-enoyl-CoA + H2O. The catalysed reaction is a 4-saturated-(3S)-3-hydroxyacyl-CoA = a (3E)-enoyl-CoA + H2O. It catalyses the reaction a (3Z)-enoyl-CoA = a 4-saturated (2E)-enoyl-CoA. The enzyme catalyses a (3E)-enoyl-CoA = a 4-saturated (2E)-enoyl-CoA. It carries out the reaction a (3S)-3-hydroxyacyl-CoA + NAD(+) = a 3-oxoacyl-CoA + NADH + H(+). The catalysed reaction is (2S,3S)-3-hydroxy-2-methylbutanoyl-CoA = (2E)-2-methylbut-2-enoyl-CoA + H2O. It catalyses the reaction (2E)-dodecenedioyl-CoA + H2O = (3S)-hydroxydodecanedioyl-CoA. The enzyme catalyses (3S)-hydroxydodecanedioyl-CoA + NAD(+) = 3-oxododecanedioyl-CoA + NADH + H(+). It carries out the reaction (2E)-octenedioyl-CoA + H2O = (3S)-hydroxyoctanedioyl-CoA. The catalysed reaction is (3S)-hydroxyoctanedioyl-CoA + NAD(+) = 3-oxooctanedioyl-CoA + NADH + H(+). It catalyses the reaction (2E)-decenedioyl-CoA + H2O = (3S)-hydroxydecanedioyl-CoA. The enzyme catalyses (3S)-hydroxydecanedioyl-CoA + NAD(+) = 3-oxodecanedioyl-CoA + NADH + H(+). It carries out the reaction (2E)-tetradecenedioyl-CoA + H2O = (3S)-hydroxytetradecanedioyl-CoA. The catalysed reaction is (3S)-hydroxytetradecanedioyl-CoA + NAD(+) = 3-oxotetradecanedioyl-CoA + NADH + H(+). It catalyses the reaction (3E,5Z)-tetradecadienoyl-CoA = (2E,5Z)-tetradecadienoyl-CoA. The enzyme catalyses (3E,5Z)-octadienoyl-CoA = (2E,5Z)-octadienoyl-CoA. It carries out the reaction (3S)-hydroxydecanoyl-CoA + NAD(+) = 3-oxodecanoyl-CoA + NADH + H(+). The catalysed reaction is (3E)-decenoyl-CoA = (2E)-decenoyl-CoA. It catalyses the reaction (3Z)-hexenoyl-CoA = (2E)-hexenoyl-CoA. The enzyme catalyses (3E)-hexenoyl-CoA = (2E)-hexenoyl-CoA. It carries out the reaction (3S)-hydroxydecanoyl-CoA = (2E)-decenoyl-CoA + H2O. The catalysed reaction is (3S)-hydroxyhexanoyl-CoA = (2E)-hexenoyl-CoA + H2O. It catalyses the reaction (3S)-hydroxyhexadecanoyl-CoA + NAD(+) = 3-oxohexadecanoyl-CoA + NADH + H(+). The enzyme catalyses (3S)-hydroxyhexadecanoyl-CoA = (2E)-hexadecenoyl-CoA + H2O. It carries out the reaction (2E)-hexadecenedioyl-CoA + H2O = (3S)-hydroxyhexadecanedioyl-CoA. The catalysed reaction is (3S)-hydroxyhexadecanedioyl-CoA + NAD(+) = 3-oxohexadecanedioyl-CoA + NADH + H(+). It participates in lipid metabolism; fatty acid beta-oxidation. Its activity is regulated as follows. Enzyme activity enhanced by acetylation. Its function is as follows. Peroxisomal trifunctional enzyme possessing 2-enoyl-CoA hydratase, 3-hydroxyacyl-CoA dehydrogenase, and delta 3, delta 2-enoyl-CoA isomerase activities. Catalyzes two of the four reactions of the long chain fatty acids peroxisomal beta-oxidation pathway. Can also use branched-chain fatty acids such as 2-methyl-2E-butenoyl-CoA as a substrate, which is hydrated into (2S,3S)-3-hydroxy-2-methylbutanoyl-CoA. Optimal isomerase for 2,5 double bonds into 3,5 form isomerization in a range of enoyl-CoA species. Also able to isomerize both 3-cis and 3-trans double bonds into the 2-trans form in a range of enoyl-CoA species. With HSD17B4, catalyzes the hydration of trans-2-enoyl-CoA and the dehydrogenation of 3-hydroxyacyl-CoA, but with opposite chiral specificity. Regulates the amount of medium-chain dicarboxylic fatty acids which are essential regulators of all fatty acid oxidation pathways. Also involved in the degradation of long-chain dicarboxylic acids through peroxisomal beta-oxidation. This is Peroxisomal bifunctional enzyme from Mus musculus (Mouse).